Consider the following 325-residue polypeptide: Prenytransferase adrG (325 aa).

7 consecutive transmembrane segments (helical) span residues 47 to 67, 71 to 91, 117 to 137, 163 to 183, 189 to 209, 236 to 256, and 258 to 278; these read LVGVAFSASISSTKIPIAVLL, MLLSIWSIFLRSAGCVWDDLI, ALLLTVALFACGGTVLIFLPW, PQITLMNIGWAVPMAMHSLGL, MTPTVCMFLFIGSVIIMIDVI, LLSYSLLCASTGFLAMAGVLT, and LGLPFFVLSVGGHFCGFWVLL.

The protein belongs to the UbiA prenyltransferase family. Mg(2+) is required as a cofactor.

The protein localises to the membrane. The enzyme catalyses 3,5-dimethylorsellinate + (2E,6E)-farnesyl diphosphate = (3R)-3-farnesyl-6-hydroxy-2,3,5-trimethyl-4-oxocyclohexa-1,5-diene-1-carboxylate + diphosphate + H(+). Its pathway is secondary metabolite biosynthesis; terpenoid biosynthesis. Prenytransferase; part of the gene cluster that mediates the biosynthesis of andrastins, meroterpenoid compounds that exhibit inhibitory activity against ras farnesyltransferase, suggesting that they could be promising leads for antitumor agents. The first step of the pathway is the synthesis of 3,5-dimethylorsellinic acid (DMOA) by the polyketide synthase adrD via condensation of one acetyl-CoA starter unit with 3 malonyl-CoA units and 2 methylations. DMAO is then converted to farnesyl-DMAO by the prenyltransferase adrG. The methyltransferase adrK catalyzes the methylation of the carboxyl group of farnesyl-DMAO to farnesyl-DMAO methyl ester which is further converted to epoxyfarnesyl-DMAO methyl ester by the FAD-dependent monooxygenase adrH. The terpene cyclase adrI then catalyzes the carbon skeletal rearrangement to generate the andrastin E, the first compound in the pathway having the andrastin scaffold, with the tetracyclic ring system. The post-cyclization tailoring enzymes adrF, adrE, adrJ, and adrA, are involved in the conversion of andrastin E into andrastin A. The short chain dehydrogenase adrF is responsible for the oxidation of the C-3 a hydroxyl group of andrastin E to yield the corresponding ketone, andrastin D. The ketoreductase adrE stereoselectively reduces the carbonyl moiety to reverse the stereochemistry of the C-3 position to yield andrastin F. The acetyltransferase adrJ is the acetyltransferase that attaches the acetyl group to the C-3 hydroxyl group of andrastin F to yield andrastin C. Finally, the cytochrome P450 monooxygenase adrA catalyzes two sequential oxidation reactions of the C-23 methyl group, to generate the corresponding alcohol andrastin B, and aldehyde andrastin A. The sequence is that of Prenytransferase adrG from Penicillium rubens (strain ATCC 28089 / DSM 1075 / NRRL 1951 / Wisconsin 54-1255) (Penicillium chrysogenum).